A 346-amino-acid polypeptide reads, in one-letter code: F(420)H(2) dehydrogenase subunit H (346 aa).

8 helical membrane-spanning segments follow: residues 18–38, 91–111, 125–145, 170–190, 196–216, 257–277, 284–304, and 326–346; these read GIVGLVLIGVIFMGAMGAVWL, IFMLGSVFLMLVALPVGAVFI, ISVLYIEAVSALSIFGIFMVA, PLGITVISVAAMTGSLNIVDI, LHWNIFLQPLGCFVFFVSLMA, ILGSFLVALLFLGGWNVPGFI, GIIVPTGFLIVKVVFVLMVII, and LLPLALLNLVWAVGLGLYLGA.

Belongs to the complex I subunit 1 family. As to quaternary structure, the FPO complex is composed of at least 13 different subunits. FpoA, FpoH, FpoJ, FpoK, FpoL, FpoM and FpoN proteins constitute the membrane sector of the complex.

The protein localises to the cell membrane. The enzyme catalyses methanophenazine + reduced coenzyme F420-(gamma-L-Glu)(n) = dihydromethanophenazine + oxidized coenzyme F420-(gamma-L-Glu)(n) + H(+). In terms of biological role, component of the F(420)H(2) dehydrogenase (FPO complex) which is part of the energy-conserving F(420)H(2):heterodisulfide oxidoreductase system. The membrane-bound electron transfer system of the complex plays an important role in the metabolism of methylotrophic methanogens when the organisms grow on methanol or methylamines. Catalyzes the oxidation of methanophenazine to dihydromethanophenazine. It shuttles electrons from F(420)H(2), via FAD and iron-sulfur (Fe-S) centers, to methanophenazine (an electron carrier in the membrane). It couples the redox reaction to proton translocation (for every two electrons transferred, two hydrogen ions are translocated across the cytoplasmic membrane), and thus conserves the redox energy in a proton gradient. This chain is F(420)H(2) dehydrogenase subunit H, found in Methanosarcina barkeri (strain Fusaro / DSM 804).